The chain runs to 840 residues: Probable alpha-glucuronidase A (840 aa).

An N-terminal signal peptide occupies residues 1–19; sequence MWSGIPIFALLSSIGIAAA. N50, N149, N222, N262, N279, N310, N465, N527, N576, N610, N682, N723, and N732 each carry an N-linked (GlcNAc...) asparagine glycan.

The protein belongs to the glycosyl hydrolase 67 family.

The protein localises to the secreted. The catalysed reaction is an alpha-D-glucuronoside + H2O = D-glucuronate + an alcohol. In terms of biological role, alpha-glucuronidase involved in the hydrolysis of xylan, a major structural heterogeneous polysaccharide found in plant biomass representing the second most abundant polysaccharide in the biosphere, after cellulose. Releases 4-O-methylglucuronic acid from xylan. This is Probable alpha-glucuronidase A (aguA) from Aspergillus fumigatus (strain ATCC MYA-4609 / CBS 101355 / FGSC A1100 / Af293) (Neosartorya fumigata).